The chain runs to 229 residues: Large ribosomal subunit protein uL1 (229 aa).

In terms of assembly, part of the 50S ribosomal subunit.

Functionally, binds directly to 23S rRNA. The L1 stalk is quite mobile in the ribosome, and is involved in E site tRNA release. Protein L1 is also a translational repressor protein, it controls the translation of the L11 operon by binding to its mRNA. This is Large ribosomal subunit protein uL1 from Rhodopseudomonas palustris (strain ATCC BAA-98 / CGA009).